A 337-amino-acid chain; its full sequence is Visual pigment-like receptor peropsin (337 aa).

Residues 1-26 (MLRNNLGNSSDSKNEDGSVFSQTEHN) are Extracellular-facing. N-linked (GlcNAc...) asparagine glycosylation occurs at asparagine 8. Residues 27-49 (IVATYLIMAGMISIISNIIVLGI) traverse the membrane as a helical segment. The Cytoplasmic segment spans residues 50-61 (FIKYKELRTPTN). A helical membrane pass occupies residues 62–87 (AIIINLAVTDIGVSSIGYPMSAASDL). Over 88–101 (YGSWKFGYAGCQVY) the chain is Extracellular. Residues cysteine 98 and cysteine 175 are joined by a disulfide bond. The chain crosses the membrane as a helical span at residues 102 to 121 (AGLNIFFGMASIGLLTVVAV). Over 122–140 (DRYLTICLPDVGRRMTTNT) the chain is Cytoplasmic. Residues 141–164 (YIGLILGAWINGLFWALMPIIGWA) traverse the membrane as a helical segment. Residues 165–188 (SYAPDPTGATCTINWRKNDRSFVS) are Extracellular-facing. A helical membrane pass occupies residues 189–212 (YTMTVIAINFIVPLTVMFYCYYHV). The Cytoplasmic portion of the chain corresponds to 213–240 (TLSIKHHTTSDCTESLNRDWSDQIDVTK). Residues 241–264 (MSVIMICMFLVAWSPYSIVCLWAS) form a helical membrane-spanning segment. Residues 265 to 272 (FGDPKKIP) are Extracellular-facing. The helical transmembrane segment at 273–297 (PPMAIIAPLFAKSSTFYNPCIYVVA) threads the bilayer. Lysine 284 carries the post-translational modification N6-(retinylidene)lysine. The Cytoplasmic portion of the chain corresponds to 298-337 (NKKFRRAMLAMFKCQTHQTMPVTSILPMDVSQNPLASGRI).

It belongs to the G-protein coupled receptor 1 family. Opsin subfamily. As to expression, found only in the eye, where it is localized to the retinal pigment epithelium (RPE). In the RPE, it is localized to the microvilli that surround the photoreceptor outer segments.

The protein resides in the membrane. Functionally, may play a role in rpe physiology either by detecting light directly or by monitoring the concentration of retinoids or other photoreceptor-derived compounds. This Homo sapiens (Human) protein is Visual pigment-like receptor peropsin (RRH).